Consider the following 506-residue polypeptide: Histidine ammonia-lyase (506 aa).

Residues 143–145 (ASG) constitute a cross-link (5-imidazolinone (Ala-Gly)). Ser144 bears the 2,3-didehydroalanine (Ser) mark.

The protein belongs to the PAL/histidase family. In terms of processing, contains an active site 4-methylidene-imidazol-5-one (MIO), which is formed autocatalytically by cyclization and dehydration of residues Ala-Ser-Gly.

It is found in the cytoplasm. It catalyses the reaction L-histidine = trans-urocanate + NH4(+). The protein operates within amino-acid degradation; L-histidine degradation into L-glutamate; N-formimidoyl-L-glutamate from L-histidine: step 1/3. The protein is Histidine ammonia-lyase of Salmonella gallinarum (strain 287/91 / NCTC 13346).